The chain runs to 83 residues: Cytochrome b559 subunit alpha (83 aa).

Residues V21–W35 traverse the membrane as a helical segment. Residue H23 coordinates heme.

It belongs to the PsbE/PsbF family. In terms of assembly, heterodimer of an alpha subunit and a beta subunit. PSII is composed of 1 copy each of membrane proteins PsbA, PsbB, PsbC, PsbD, PsbE, PsbF, PsbH, PsbI, PsbJ, PsbK, PsbL, PsbM, PsbT, PsbX, PsbY, PsbZ, Psb30/Ycf12, at least 3 peripheral proteins of the oxygen-evolving complex and a large number of cofactors. It forms dimeric complexes. Requires heme b as cofactor.

It localises to the plastid. The protein localises to the chloroplast thylakoid membrane. This b-type cytochrome is tightly associated with the reaction center of photosystem II (PSII). PSII is a light-driven water:plastoquinone oxidoreductase that uses light energy to abstract electrons from H(2)O, generating O(2) and a proton gradient subsequently used for ATP formation. It consists of a core antenna complex that captures photons, and an electron transfer chain that converts photonic excitation into a charge separation. The polypeptide is Cytochrome b559 subunit alpha (Liriodendron tulipifera (Tuliptree)).